The chain runs to 295 residues: Phosphatidylserine decarboxylase proenzyme (295 aa).

Residues Asp-90 and Ser-258 each act as charge relay system; for autoendoproteolytic cleavage activity in the active site. Ser-258 serves as the catalytic Schiff-base intermediate with substrate; via pyruvic acid; for decarboxylase activity. Ser-258 carries the post-translational modification Pyruvic acid (Ser); by autocatalysis.

It belongs to the phosphatidylserine decarboxylase family. PSD-B subfamily. Prokaryotic type I sub-subfamily. Heterodimer of a large membrane-associated beta subunit and a small pyruvoyl-containing alpha subunit. Pyruvate is required as a cofactor. Post-translationally, is synthesized initially as an inactive proenzyme. Formation of the active enzyme involves a self-maturation process in which the active site pyruvoyl group is generated from an internal serine residue via an autocatalytic post-translational modification. Two non-identical subunits are generated from the proenzyme in this reaction, and the pyruvate is formed at the N-terminus of the alpha chain, which is derived from the carboxyl end of the proenzyme. The autoendoproteolytic cleavage occurs by a canonical serine protease mechanism, in which the side chain hydroxyl group of the serine supplies its oxygen atom to form the C-terminus of the beta chain, while the remainder of the serine residue undergoes an oxidative deamination to produce ammonia and the pyruvoyl prosthetic group on the alpha chain. During this reaction, the Ser that is part of the protease active site of the proenzyme becomes the pyruvoyl prosthetic group, which constitutes an essential element of the active site of the mature decarboxylase.

Its subcellular location is the cell membrane. The enzyme catalyses a 1,2-diacyl-sn-glycero-3-phospho-L-serine + H(+) = a 1,2-diacyl-sn-glycero-3-phosphoethanolamine + CO2. It participates in phospholipid metabolism; phosphatidylethanolamine biosynthesis; phosphatidylethanolamine from CDP-diacylglycerol: step 2/2. Functionally, catalyzes the formation of phosphatidylethanolamine (PtdEtn) from phosphatidylserine (PtdSer). In Blochmanniella pennsylvanica (strain BPEN), this protein is Phosphatidylserine decarboxylase proenzyme.